A 230-amino-acid chain; its full sequence is Dickkopf-like protein 1 (230 aa).

Residues 1 to 20 (MCRLRVLLLLLPLAFVSSSA) form the signal peptide. Asn-31, Asn-87, and Asn-102 each carry an N-linked (GlcNAc...) asparagine glycan.

Interacts with SLXL1; Co-localize in seminiferous tubules. Interacts with SLY. In terms of processing, N-glycosylated during spermatogenesis. Not N-glycosylated in mature sperm. In terms of tissue distribution, testis-specific. Abundant in the seminiferous tubules where it is associated with developing spermatocytes. Expressed only in testis (at protein level). Not detectable on postnatal days 4 and 9 but after day 18 it gradually increased as the development of testes progressed. Expressed at high levels in testis and at weak levels in epididymis.

It is found in the secreted. It localises to the cytoplasmic vesicle. The protein localises to the secretory vesicle. The protein resides in the acrosome. Functionally, involved in fertilization by facilitating sperm penetration of the zona pellucida. May promote spermatocyte apoptosis, thereby limiting sperm production. In adults, may reduce testosterone synthesis in Leydig cells. Is not essential either for development or fertility. The protein is Dickkopf-like protein 1 of Mus musculus (Mouse).